A 62-amino-acid polypeptide reads, in one-letter code: uncharacterized protein (62 aa).

A disordered region spans residues 1-62 (MSSTAEEMAA…SNGEAKRKEK (62 aa)). The segment covering 28-37 (TKSDRVEHKH) has biased composition (basic and acidic residues).

This is an uncharacterized protein from Caenorhabditis elegans.